Consider the following 136-residue polypeptide: Nucleoside diphosphate kinase (136 aa).

ATP is bound by residues K10, F58, R86, T92, R104, and N114. Residue H117 is the Pros-phosphohistidine intermediate of the active site.

The protein belongs to the NDK family. Homotetramer. Mg(2+) serves as cofactor.

The protein localises to the cytoplasm. The catalysed reaction is a 2'-deoxyribonucleoside 5'-diphosphate + ATP = a 2'-deoxyribonucleoside 5'-triphosphate + ADP. It carries out the reaction a ribonucleoside 5'-diphosphate + ATP = a ribonucleoside 5'-triphosphate + ADP. Functionally, major role in the synthesis of nucleoside triphosphates other than ATP. The ATP gamma phosphate is transferred to the NDP beta phosphate via a ping-pong mechanism, using a phosphorylated active-site intermediate. The chain is Nucleoside diphosphate kinase from Mycolicibacterium gilvum (strain PYR-GCK) (Mycobacterium gilvum (strain PYR-GCK)).